We begin with the raw amino-acid sequence, 303 residues long: Protein-lysine N-methyltransferase rrg1 (303 aa).

S-adenosyl-L-methionine-binding positions include Trp-117, 143-145, Asp-165, Trp-198, and Ser-221; that span reads GAG.

This sequence belongs to the class I-like SAM-binding methyltransferase superfamily. METTL21 family.

It is found in the cytoplasm. The protein localises to the nucleus. S-adenosyl-L-methionine-dependent protein-lysine N-methyltransferase that methylates elongation factor 2 and elongation factor 3A. This is Protein-lysine N-methyltransferase rrg1 from Schizosaccharomyces pombe (strain 972 / ATCC 24843) (Fission yeast).